We begin with the raw amino-acid sequence, 510 residues long: Histidine ammonia-lyase (510 aa).

Residues 143-145 (ASG) constitute a cross-link (5-imidazolinone (Ala-Gly)). Position 144 is a 2,3-didehydroalanine (Ser) (serine 144).

The protein belongs to the PAL/histidase family. Contains an active site 4-methylidene-imidazol-5-one (MIO), which is formed autocatalytically by cyclization and dehydration of residues Ala-Ser-Gly.

Its subcellular location is the cytoplasm. The enzyme catalyses L-histidine = trans-urocanate + NH4(+). The protein operates within amino-acid degradation; L-histidine degradation into L-glutamate; N-formimidoyl-L-glutamate from L-histidine: step 1/3. This chain is Histidine ammonia-lyase, found in Yersinia pestis.